Here is a 126-residue protein sequence, read N- to C-terminus: Cystatin-C (126 aa).

Positions 1–18 (MKMLVFPVLAALFAVGLG) are cleaved as a signal peptide. One can recognise a Cystatin domain in the interval 22–115 (GAPRDINISE…CTFSVWSRPW (94 aa)). Positions 64-68 (QVVSG) match the Secondary area of contact motif. 2 cysteine pairs are disulfide-bonded: Cys82-Cys92 and Cys106-Cys126.

This sequence belongs to the cystatin family. In terms of tissue distribution, ubiquitously expressed in normal tissues including brain, eye, gill, heart, gullet, liver, spleen, stomach, pyloric ceca, intestine, kidney and muscle. Expressed, but not up-regulated, in lipopolysaccharide (LPS)-stimulated tissues including kidney, spleen, muscle and gill.

It localises to the secreted. Thiol protease inhibitor. Has high papain inhibitory activity and inhibits to a lesser extent fish cathepsins L, S, K, F, X and bovine cathepsin B in vitro. This Paralichthys olivaceus (Bastard halibut) protein is Cystatin-C.